The primary structure comprises 282 residues: tRNA (guanine-N(7)-)-methyltransferase (282 aa).

The interval 1 to 29 (MPHAPAKRQKREEYKNALHEDESNAALPK) is disordered. Positions 10-22 (KREEYKNALHEDE) are enriched in basic and acidic residues. S-adenosyl-L-methionine-binding positions include Gly-104, 153–154 (NT), and Cys-173. Asp-176 is an active-site residue. Position 255–257 (255–257 (TEE)) interacts with S-adenosyl-L-methionine.

It belongs to the class I-like SAM-binding methyltransferase superfamily. TrmB family. Forms a complex with TRM82.

It localises to the nucleus. The catalysed reaction is guanosine(46) in tRNA + S-adenosyl-L-methionine = N(7)-methylguanosine(46) in tRNA + S-adenosyl-L-homocysteine. The protein operates within tRNA modification; N(7)-methylguanine-tRNA biosynthesis. Functionally, catalyzes the formation of N(7)-methylguanine at position 46 (m7G46) in tRNA. The sequence is that of tRNA (guanine-N(7)-)-methyltransferase from Phaeosphaeria nodorum (strain SN15 / ATCC MYA-4574 / FGSC 10173) (Glume blotch fungus).